Here is a 287-residue protein sequence, read N- to C-terminus: Bifunctional protein FolD (287 aa).

NADP(+) contacts are provided by residues 160–162, Ser-189, and Thr-230; that span reads GRS.

Belongs to the tetrahydrofolate dehydrogenase/cyclohydrolase family. Homodimer.

The catalysed reaction is (6R)-5,10-methylene-5,6,7,8-tetrahydrofolate + NADP(+) = (6R)-5,10-methenyltetrahydrofolate + NADPH. It carries out the reaction (6R)-5,10-methenyltetrahydrofolate + H2O = (6R)-10-formyltetrahydrofolate + H(+). Its pathway is one-carbon metabolism; tetrahydrofolate interconversion. Functionally, catalyzes the oxidation of 5,10-methylenetetrahydrofolate to 5,10-methenyltetrahydrofolate and then the hydrolysis of 5,10-methenyltetrahydrofolate to 10-formyltetrahydrofolate. In Chlamydia muridarum (strain MoPn / Nigg), this protein is Bifunctional protein FolD.